We begin with the raw amino-acid sequence, 429 residues long: Cytochrome c biogenesis protein CcsB (429 aa).

3 helical membrane-spanning segments follow: residues 14 to 34, 72 to 92, and 162 to 182; these read LKVA…GTAL, SFWF…CSWK, and VGPP…TYGV.

This sequence belongs to the Ccs1/CcsB family. May interact with CcsA.

The protein resides in the cellular thylakoid membrane. In terms of biological role, required during biogenesis of c-type cytochromes (cytochrome c6 and cytochrome f) at the step of heme attachment. The polypeptide is Cytochrome c biogenesis protein CcsB (Prochlorococcus marinus (strain SARG / CCMP1375 / SS120)).